Reading from the N-terminus, the 70-residue chain is Large ribosomal subunit protein bL31 (70 aa).

Zn(2+) contacts are provided by Cys-16, Cys-18, Cys-37, and Cys-40.

This sequence belongs to the bacterial ribosomal protein bL31 family. Type A subfamily. In terms of assembly, part of the 50S ribosomal subunit. It depends on Zn(2+) as a cofactor.

Its function is as follows. Binds the 23S rRNA. The protein is Large ribosomal subunit protein bL31 of Desulfovibrio desulfuricans (strain ATCC 27774 / DSM 6949 / MB).